Here is a 207-residue protein sequence, read N- to C-terminus: Twist-related protein 1 (207 aa).

Low complexity predominate over residues 1 to 18; sequence MMQDVSSSPVSPADDSLS. The interval 1 to 110 is disordered; sequence MMQDVSSSPV…GGGSPQSYEE (110 aa). Residues 34–43 are compositionally biased toward basic residues; sequence RGGRKRRSSR. Gly residues-rich tracts occupy residues 46-65 and 80-104; these read AGGG…GGDE and GCGG…GGGS. A bHLH domain is found at 113–164; the sequence is TQRVMANVRERQRTQSLNEAFAALRKIIPTLPSDKLSKIQTLKLAARYIDFL. Positions 166 to 196 are sufficient for transactivation activity; the sequence is QVLQSDELDSKMASCSYVAHERLSYAFSVWR.

In terms of assembly, efficient DNA binding requires dimerization with another bHLH protein. Homodimer or heterodimer with E proteins such as TCF3. ID1 binds preferentially to TCF3 but does not interact efficiently with TWIST1 so ID1 levels control the amount of TCF3 available to dimerize with TWIST and thus determine the type of dimer formed.

The protein resides in the nucleus. Its function is as follows. Acts as a transcriptional regulator. Inhibits myogenesis by sequestrating E proteins, inhibiting trans-activation by MEF2, and inhibiting DNA-binding by MYOD1 through physical interaction. This interaction probably involves the basic domains of both proteins. Also represses expression of pro-inflammatory cytokines such as TNFA and IL1B. Regulates cranial suture patterning and fusion. Activates transcription as a heterodimer with E proteins. Regulates gene expression differentially, depending on dimer composition. Homodimers induce expression of FGFR2 and POSTN while heterodimers repress FGFR2 and POSTN expression and induce THBS1 expression. Heterodimerization is also required for osteoblast differentiation. Represses the activity of the circadian transcriptional activator: NPAS2-BMAL1 heterodimer. The sequence is that of Twist-related protein 1 (TWIST1) from Cebus capucinus (White-faced sapajou).